The primary structure comprises 375 residues: Actin, cytoplasmic (375 aa).

The protein belongs to the actin family.

The protein localises to the cytoplasm. It is found in the cytoskeleton. It carries out the reaction ATP + H2O = ADP + phosphate + H(+). Its function is as follows. Actins are highly conserved proteins that are involved in various types of cell motility and are ubiquitously expressed in all eukaryotic cells. In Oxytricha trifallax (Sterkiella histriomuscorum), this protein is Actin, cytoplasmic.